We begin with the raw amino-acid sequence, 322 residues long: Transaldolase (322 aa).

Residue lysine 136 is the Schiff-base intermediate with substrate of the active site.

This sequence belongs to the transaldolase family. Type 1 subfamily. As to quaternary structure, homodimer.

The protein resides in the cytoplasm. It carries out the reaction D-sedoheptulose 7-phosphate + D-glyceraldehyde 3-phosphate = D-erythrose 4-phosphate + beta-D-fructose 6-phosphate. Its pathway is carbohydrate degradation; pentose phosphate pathway; D-glyceraldehyde 3-phosphate and beta-D-fructose 6-phosphate from D-ribose 5-phosphate and D-xylulose 5-phosphate (non-oxidative stage): step 2/3. Its function is as follows. Transaldolase is important for the balance of metabolites in the pentose-phosphate pathway. The protein is Transaldolase of Xanthomonas oryzae pv. oryzae (strain KACC10331 / KXO85).